Here is a 208-residue protein sequence, read N- to C-terminus: Neuroendocrine protein 7B2 (208 aa).

Positions 1–26 (MGMYSAIPLALPMVLLMVYGLTPSLG) are cleaved as a signal peptide. A disulfide bridge connects residues cysteine 120 and cysteine 129. Residue serine 204 is modified to Phosphoserine.

Belongs to the 7B2 family. As to quaternary structure, interacts with pcsk2 early in the secretory pathway. Dissociation occurs at later stages. In terms of processing, proteolytically cleaved in the Golgi by a furin-like convertase to generate bioactive peptides. Post-translationally, sulfated on tyrosine residues.

It is found in the secreted. In terms of biological role, acts as a molecular chaperone for pcsk2, preventing its premature activation in the regulated secretory pathway. Binds to inactive pcsk2 in the endoplasmic reticulum and facilitates its transport from there to later compartments of the secretory pathway where it is proteolytically matured and activated. Also required for cleavage of pcsk2 but does not appear to be involved in its folding. This is Neuroendocrine protein 7B2 (scg5.L) from Xenopus laevis (African clawed frog).